A 514-amino-acid chain; its full sequence is 3-octaprenyl-4-hydroxybenzoate carboxy-lyase (514 aa).

Asparagine 177 is a Mn(2+) binding site. Prenylated FMN is bound by residues 180 to 182 (IYR), 194 to 196 (RWL), and 199 to 200 (RG). A Mn(2+)-binding site is contributed by glutamate 243. Aspartate 314 (proton donor) is an active-site residue.

Belongs to the UbiD family. As to quaternary structure, homohexamer. Prenylated FMN is required as a cofactor. Mn(2+) serves as cofactor.

It localises to the cell membrane. It catalyses the reaction a 4-hydroxy-3-(all-trans-polyprenyl)benzoate + H(+) = a 2-(all-trans-polyprenyl)phenol + CO2. It functions in the pathway cofactor biosynthesis; ubiquinone biosynthesis. Functionally, catalyzes the decarboxylation of 3-octaprenyl-4-hydroxy benzoate to 2-octaprenylphenol, an intermediate step in ubiquinone biosynthesis. In Bordetella bronchiseptica (strain ATCC BAA-588 / NCTC 13252 / RB50) (Alcaligenes bronchisepticus), this protein is 3-octaprenyl-4-hydroxybenzoate carboxy-lyase.